The chain runs to 307 residues: UDP-3-O-acyl-N-acetylglucosamine deacetylase (307 aa).

3 residues coordinate Zn(2+): His-79, His-239, and Asp-243. His-266 functions as the Proton donor in the catalytic mechanism.

The protein belongs to the LpxC family. Zn(2+) serves as cofactor.

It carries out the reaction a UDP-3-O-[(3R)-3-hydroxyacyl]-N-acetyl-alpha-D-glucosamine + H2O = a UDP-3-O-[(3R)-3-hydroxyacyl]-alpha-D-glucosamine + acetate. The protein operates within glycolipid biosynthesis; lipid IV(A) biosynthesis; lipid IV(A) from (3R)-3-hydroxytetradecanoyl-[acyl-carrier-protein] and UDP-N-acetyl-alpha-D-glucosamine: step 2/6. Catalyzes the hydrolysis of UDP-3-O-myristoyl-N-acetylglucosamine to form UDP-3-O-myristoylglucosamine and acetate, the committed step in lipid A biosynthesis. This Tolumonas auensis (strain DSM 9187 / NBRC 110442 / TA 4) protein is UDP-3-O-acyl-N-acetylglucosamine deacetylase.